We begin with the raw amino-acid sequence, 864 residues long: Protein SBE2 (864 aa).

3 disordered regions span residues 16-84 (LDPL…PSSN), 123-142 (SSTEIFSSSHSNTTSDSLCT), and 213-235 (RQNSVSTPKLSRTVGLPGSSNTT). Residues 17–26 (DPLKEEDSTH) show a composition bias toward basic and acidic residues. Low complexity predominate over residues 51-71 (CSLPLSKSRSGSSASSSTTGS). The span at 72–84 (NGKNIGTRRPSSN) shows a compositional bias: polar residues. Phosphoserine is present on residues serine 82 and serine 83. A compositionally biased stretch (low complexity) spans 123–139 (SSTEIFSSSHSNTTSDS). Residues 213-222 (RQNSVSTPKL) show a composition bias toward polar residues. Phosphoserine is present on residues serine 450 and serine 532.

It belongs to the SBE2 family.

It is found in the golgi apparatus. Its function is as follows. With SBE22, is involved in cell wall integrity and polarity processes like bud growth, through the transport of CHS3 and UTR2 to sites of growth. The polypeptide is Protein SBE2 (SBE2) (Saccharomyces cerevisiae (strain YJM789) (Baker's yeast)).